A 368-amino-acid chain; its full sequence is 3-dehydroquinate synthase (368 aa).

NAD(+) is bound by residues 69 to 74, 103 to 107, 127 to 128, Lys140, and Lys149; these read DGEAYK, GVIGD, and TT. Glu182, His245, and His262 together coordinate Zn(2+).

The protein belongs to the sugar phosphate cyclases superfamily. Dehydroquinate synthase family. Co(2+) serves as cofactor. It depends on Zn(2+) as a cofactor. The cofactor is NAD(+).

The protein resides in the cytoplasm. The catalysed reaction is 7-phospho-2-dehydro-3-deoxy-D-arabino-heptonate = 3-dehydroquinate + phosphate. It functions in the pathway metabolic intermediate biosynthesis; chorismate biosynthesis; chorismate from D-erythrose 4-phosphate and phosphoenolpyruvate: step 2/7. In terms of biological role, catalyzes the conversion of 3-deoxy-D-arabino-heptulosonate 7-phosphate (DAHP) to dehydroquinate (DHQ). The sequence is that of 3-dehydroquinate synthase from Pseudomonas aeruginosa (strain UCBPP-PA14).